We begin with the raw amino-acid sequence, 528 residues long: Sphingosine-1-phosphate lyase (528 aa).

A helical transmembrane segment spans residues 13-35; it reads PAKLVLATAGITAASILAYQAIT. At Lys-324 the chain carries N6-(pyridoxal phosphate)lysine.

This sequence belongs to the group II decarboxylase family. Sphingosine-1-phosphate lyase subfamily. Requires pyridoxal 5'-phosphate as cofactor.

It localises to the endoplasmic reticulum membrane. The catalysed reaction is sphinganine 1-phosphate = hexadecanal + phosphoethanolamine. It participates in lipid metabolism; sphingolipid metabolism. Its function is as follows. Cleaves phosphorylated sphingoid bases (PSBs), such as sphingosine-1-phosphate, into fatty aldehydes and phosphoethanolamine. Sphingosine-1-phosphate (S1P) probably acts intracellularly as a second messenger perhaps by promoting cell proliferation; the absence of S1P lyase increases its concentration. This leads to increased lateral pseudopod formation as well as defects in the efficiency of chemotaxis. Overexpression of S1P lyase causes decreased growth rates, entry into stationary phase at lower cell density and increased sensitivity to the antitumor agents cisplatin and carboplatin; these effects are more pronounced in cells that express more enzyme. The sequence is that of Sphingosine-1-phosphate lyase (sglA) from Dictyostelium discoideum (Social amoeba).